A 208-amino-acid polypeptide reads, in one-letter code: Golgi apparatus membrane protein TVP23 homolog B (208 aa).

Position 1 is an N-acetylmethionine (Met-1). Over residues 1–21 (MLQQDSNDDTEDVSLFDAEEE) the composition is skewed to acidic residues. Residues 1-27 (MLQQDSNDDTEDVSLFDAEEETTNRPK) are disordered. 4 helical membrane-spanning segments follow: residues 34-53 (PVASFFHLFFRVSAIIVYLL), 54-72 (CELFSSSFIACMVTIILLL), 126-146 (IFWLGLVACPVLWVVFAFSAL), and 152-172 (KWLAVVIMGVVLQGANLYGYI).

It belongs to the TVP23 family.

Its subcellular location is the membrane. This is Golgi apparatus membrane protein TVP23 homolog B (TVP23B) from Bos taurus (Bovine).